The primary structure comprises 294 residues: Nucleotide-binding protein Daud_0300 (294 aa).

An ATP-binding site is contributed by 11–18 (GLSGAGKT). 62 to 65 (DIRG) contacts GTP.

This sequence belongs to the RapZ-like family.

Functionally, displays ATPase and GTPase activities. The polypeptide is Nucleotide-binding protein Daud_0300 (Desulforudis audaxviator (strain MP104C)).